The chain runs to 468 residues: 6-phospho-beta-galactosidase (468 aa).

Positions 19, 116, 159, 160, and 297 each coordinate D-galactose 6-phosphate. Residue Glu160 is the Proton donor of the active site. Catalysis depends on Glu375, which acts as the Nucleophile. Residues Ser428, Trp429, Lys435, and Tyr437 each contribute to the D-galactose 6-phosphate site.

It belongs to the glycosyl hydrolase 1 family.

The catalysed reaction is a 6-phospho-beta-D-galactoside + H2O = D-galactose 6-phosphate + an alcohol. It participates in carbohydrate metabolism; lactose degradation; D-galactose 6-phosphate and beta-D-glucose from lactose 6-phosphate: step 1/1. This Streptococcus pyogenes serotype M18 (strain MGAS8232) protein is 6-phospho-beta-galactosidase.